Reading from the N-terminus, the 535-residue chain is T-complex protein 1 subunit zeta 2 (535 aa).

Belongs to the TCP-1 chaperonin family. Heterooligomeric complex of about 850 to 900 kDa that forms two stacked rings, 12 to 16 nm in diameter.

It is found in the cytoplasm. Its function is as follows. Molecular chaperone; assists the folding of proteins upon ATP hydrolysis. Known to play a role, in vitro, in the folding of actin and tubulin. The sequence is that of T-complex protein 1 subunit zeta 2 from Arabidopsis thaliana (Mouse-ear cress).